The sequence spans 150 residues: Probable cyclase FGR4 (150 aa).

It participates in secondary metabolite biosynthesis. In terms of biological role, probable cyclase; part of the gene cluster that mediates the biosynthesis of the tetraketides fugralins such as linear fugralin A and cyclic fugralin B, volatile compounds that play a role in the asexual reproductive cycle but are not involved in pathogenicity. Fugralin B is similar to fugralin A except for a cyclization between the carboxylic acid C-8 and the alcohol on C-4 resulting in a six membered lactone ring, probably catalyzed by the cyclase FGR4. One of the key features of fugralins is the presence of a double methyl group, which is only rarely encountered in fungal secondary metabolites. As the fugralins cluster does not contain an independent methyltransferase, the PKS FGR1 is probably responsible for adding two methyl groups to the same carbon atom. The exact role of the individual cluster genes remains unknown and further work is needed to unravel the biosynthetic pathway. This is Probable cyclase FGR4 from Gibberella zeae (strain ATCC MYA-4620 / CBS 123657 / FGSC 9075 / NRRL 31084 / PH-1) (Wheat head blight fungus).